A 258-amino-acid chain; its full sequence is Probable dihydroorotate dehydrogenase B (NAD(+)), electron transfer subunit (258 aa).

Positions 1 to 90 constitute an FAD-binding FR-type domain; that stretch reads MRPISATIKE…RGPYGNGWEI (90 aa). [2Fe-2S] cluster contacts are provided by cysteine 210, cysteine 215, cysteine 218, and cysteine 228.

Belongs to the PyrK family. In terms of assembly, heterotetramer of 2 PyrK and 2 PyrD type B subunits. [2Fe-2S] cluster is required as a cofactor. It depends on FAD as a cofactor.

The protein operates within pyrimidine metabolism; UMP biosynthesis via de novo pathway; orotate from (S)-dihydroorotate (NAD(+) route): step 1/1. Its function is as follows. Responsible for channeling the electrons from the oxidation of dihydroorotate from the FMN redox center in the PyrD type B subunit to the ultimate electron acceptor NAD(+). This Methanocella arvoryzae (strain DSM 22066 / NBRC 105507 / MRE50) protein is Probable dihydroorotate dehydrogenase B (NAD(+)), electron transfer subunit.